The primary structure comprises 329 residues: GTPase Obg (329 aa).

In terms of domain architecture, Obg spans Met-1–Leu-159. The region spanning Ala-160–Gly-328 is the OBG-type G domain. ATP is bound by residues Gly-166–Ser-173, Phe-191–Ile-195, Asp-213–Gly-216, Asn-280–Glu-283, and Ser-309–Ala-311. Positions 173 and 193 each coordinate Mg(2+).

It belongs to the TRAFAC class OBG-HflX-like GTPase superfamily. OBG GTPase family. In terms of assembly, monomer. Requires Mg(2+) as cofactor.

The protein localises to the cytoplasm. An essential GTPase which binds GTP, GDP and possibly (p)ppGpp with moderate affinity, with high nucleotide exchange rates and a fairly low GTP hydrolysis rate. Plays a role in control of the cell cycle, stress response, ribosome biogenesis and in those bacteria that undergo differentiation, in morphogenesis control. This Synechococcus sp. (strain CC9311) protein is GTPase Obg.